Consider the following 481-residue polypeptide: Probable autolysin LytO (481 aa).

A Peptidase C51 domain is found at 7–148; it reads KNEFIEWLKT…AYDFPMWFIR (142 aa). Polar residues predominate over residues 155-165; it reads TAPRSVQSPTQ. The tract at residues 155-177 is disordered; sequence TAPRSVQSPTQAPKKETAKPQPK. Residues 198-323 enclose the N-acetylmuramoyl-L-alanine amidase domain; that stretch reads SNPKGIVIHN…NEFTSTSCPH (126 aa). Residues 398–466 enclose the SH3b domain; the sequence is EESARFTNGN…YLPIRTWNGS (69 aa).

The protein belongs to the N-acetylmuramoyl-L-alanine amidase 2 family.

It catalyses the reaction Hydrolyzes the link between N-acetylmuramoyl residues and L-amino acid residues in certain cell-wall glycopeptides.. Its function is as follows. Has weak lytic activity toward S.aureus cells. In Staphylococcus aureus (strain NCTC 8325 / PS 47), this protein is Probable autolysin LytO.